The primary structure comprises 613 residues: Coiled-coil domain-containing protein 116 (613 aa).

Residues 41 to 68 (KPGRVPHPPSTCGSSALQGQRRNKRHPQ) form a disordered region. Residues 51-60 (TCGSSALQGQ) are compositionally biased toward polar residues. Positions 79 to 104 (ESQVLDSLETVVEKATERMAAMKTEA) form a coiled coil. Disordered regions lie at residues 329 to 395 (CRDG…AQVA), 509 to 541 (RQASRLSTSHCSTETPSVQQEPATHTAQDQATE), and 565 to 613 (MSAC…EDGV). The residue at position 386 (S386) is a Phosphoserine. Residues 512–539 (SRLSTSHCSTETPSVQQEPATHTAQDQA) show a composition bias toward polar residues. Residues 577-589 (KSKDMDNEGRDKA) are compositionally biased toward basic and acidic residues. The span at 590 to 613 (EIEDEDEDEFKDEDQDEDKDEDGV) shows a compositional bias: acidic residues.

It is found in the cytoplasm. Its subcellular location is the cytoskeleton. It localises to the microtubule organizing center. The protein resides in the centrosome. In Homo sapiens (Human), this protein is Coiled-coil domain-containing protein 116 (CCDC116).